The primary structure comprises 184 residues: Adenine phosphoribosyltransferase (184 aa).

The protein belongs to the purine/pyrimidine phosphoribosyltransferase family. Homodimer.

The protein localises to the cytoplasm. It catalyses the reaction AMP + diphosphate = 5-phospho-alpha-D-ribose 1-diphosphate + adenine. Its pathway is purine metabolism; AMP biosynthesis via salvage pathway; AMP from adenine: step 1/1. Functionally, catalyzes a salvage reaction resulting in the formation of AMP, that is energically less costly than de novo synthesis. In Paracidovorax citrulli (strain AAC00-1) (Acidovorax citrulli), this protein is Adenine phosphoribosyltransferase.